Here is a 365-residue protein sequence, read N- to C-terminus: Eukaryotic translation initiation factor 3 subunit H (365 aa).

The 150-residue stretch at 11-160 folds into the MPN domain; it reads VQVEALVVMK…LRAFRLSPQF (150 aa). Residues 273 to 303 adopt a coiled-coil conformation; the sequence is YQRSLAREQTKIAAWQAKRKAENATRAQLKQ.

Belongs to the eIF-3 subunit H family. As to quaternary structure, component of the eukaryotic translation initiation factor 3 (eIF-3) complex.

It is found in the cytoplasm. Its function is as follows. Component of the eukaryotic translation initiation factor 3 (eIF-3) complex, which is involved in protein synthesis of a specialized repertoire of mRNAs and, together with other initiation factors, stimulates binding of mRNA and methionyl-tRNAi to the 40S ribosome. The eIF-3 complex specifically targets and initiates translation of a subset of mRNAs involved in cell proliferation. In Coccidioides immitis (strain RS) (Valley fever fungus), this protein is Eukaryotic translation initiation factor 3 subunit H.